Consider the following 153-residue polypeptide: Fucose mutarotase (153 aa).

Histidine 24 acts as the Proton donor in catalysis. Aspartate 32 contacts substrate. Aspartate 69 is a catalytic residue. The substrate site is built by methionine 79, tyrosine 119, tyrosine 137, and asparagine 139. Tyrosine 119 is a catalytic residue.

This sequence belongs to the RbsD / FucU family. Mainly homodimer, but also exists as homotetramer, homooctamer, and homodecamer. The homodimeric form seems catalytically inactive.

It catalyses the reaction alpha-L-fucose = beta-L-fucose. Its pathway is carbohydrate metabolism; L-fucose metabolism. Its function is as follows. Involved in the interconversion between alpha- and beta-L-fucoses. L-Fucose (6-deoxy-L-galactose) exists as alpha-L-fucose (29.5%) and beta-L-fucose (70.5%), the beta-form is metabolized through the salvage pathway. GDP-L-fucose formed either by the de novo or salvage pathways is transported into the endoplasmic reticulum, where it serves as a substrate for N- and O-glycosylations by fucosyltransferases. Fucosylated structures expressed on cell surfaces or secreted in biological fluids are believed to play a critical role in cell-cell adhesion and recognition processes. This chain is Fucose mutarotase (FUOM), found in Bos taurus (Bovine).